We begin with the raw amino-acid sequence, 1004 residues long: uncharacterized protein (1004 aa).

N-linked (GlcNAc...) asparagine glycosylation occurs at Asn27. The next 4 membrane-spanning stretches (helical) occupy residues 38 to 58, 77 to 97, 188 to 208, and 324 to 344; these read FGFS…LLAI, IVPD…LIVI, LSPV…LIAY, and FILM…SLFS. N-linked (GlcNAc...) asparagine glycosylation is found at Asn392, Asn418, and Asn421. A run of 2 helical transmembrane segments spans residues 422 to 442 and 599 to 619; these read MSLS…VIAF and MSNI…IIDM. An N-linked (GlcNAc...) asparagine glycan is attached at Asn627. A run of 2 helical transmembrane segments spans residues 726-746 and 823-843; these read GYPL…ISVF and GDYI…VLGS. Asn859 carries an N-linked (GlcNAc...) asparagine glycan.

It to yeast YPR031w.

Its subcellular location is the membrane. This is an uncharacterized protein from Schizosaccharomyces pombe (strain 972 / ATCC 24843) (Fission yeast).